A 147-amino-acid polypeptide reads, in one-letter code: Proteinase inhibitor type-2 T (147 aa).

Positions Met-1–Ala-25 are cleaved as a signal peptide. 2 repeat units span residues Ala-25 to Pro-82 and Lys-83 to Pro-142. Disulfide bonds link Cys-28-Cys-116, Cys-32-Cys-112, Cys-40-Cys-122, Cys-52-Cys-89, Cys-55-Cys-73, Cys-56-Cys-85, Cys-62-Cys-98, and Cys-115-Cys-133.

It belongs to the protease inhibitor I20 (potato type II proteinase inhibitor) family.

Inhibitor of trypsin and chymotrypsin. The protein is Proteinase inhibitor type-2 T (PIN2T) of Solanum tuberosum (Potato).